Reading from the N-terminus, the 92-residue chain is Alpha-conotoxin-like Mi20.2 (92 aa).

A signal peptide spans 1 to 24 (MPKLEMMLLVLLILPLSSFSAAGE). The propeptide occupies 25 to 45 (QVVQGDQRSDGLARYLQRGGR). A 4-carboxyglutamate modification is found at Glu-49. 4-hydroxyproline is present on Pro-55. 4 disulfides stabilise this stretch: Cys-63–Cys-72, Cys-68–Cys-80, Cys-73–Cys-90, and Cys-78–Cys-92.

The protein belongs to the conotoxin D superfamily. In terms of assembly, hetero-, homo- or pseudo-homodimer (identical sequence, different post-translational modifications). As to expression, expressed by the venom duct.

The protein localises to the secreted. In terms of biological role, alpha-conotoxins act on postsynaptic membranes, they bind to the nicotinic acetylcholine receptors (nAChR) and thus inhibit them. Through its two C-terminal domains, this homodimeric protein would bind to two nAChR allosteric sites, located outside the nAChR C-loop of the principal binding face and at the adjacent binding interface in a clockwise direction. This toxin specifically blocks mammalian neuronal nAChR of the alpha-7/CHRNA7, alpha-3-beta-2/CHRNA3-CHRNB2 and alpha-4-beta-2/CHRNA4-CHRNB2 subtypes. The protein is Alpha-conotoxin-like Mi20.2 of Conus miles (Soldier cone).